The chain runs to 307 residues: tRNA dimethylallyltransferase (307 aa).

Residue 16–23 (GCTAVGKT) coordinates ATP. Residue 18-23 (TAVGKT) participates in substrate binding. The interval 41–44 (DSLL) is interaction with substrate tRNA.

This sequence belongs to the IPP transferase family. Monomer. Mg(2+) is required as a cofactor.

The catalysed reaction is adenosine(37) in tRNA + dimethylallyl diphosphate = N(6)-dimethylallyladenosine(37) in tRNA + diphosphate. Its function is as follows. Catalyzes the transfer of a dimethylallyl group onto the adenine at position 37 in tRNAs that read codons beginning with uridine, leading to the formation of N6-(dimethylallyl)adenosine (i(6)A). The chain is tRNA dimethylallyltransferase from Opitutus terrae (strain DSM 11246 / JCM 15787 / PB90-1).